Reading from the N-terminus, the 463-residue chain is MGKEKNHVNVVVIGHVDSGKSTTTGHLIYKCGGIDKRTIEKFEKEAAELGKGSFKYAWVLDKLKAERERGITIDIALWKFETPKYYVTVIDAPGHRDFIKNMITGTSQADCAILIIAAGTGEFEAGISKDGQTREHALLAFTLGVRQLIVAINKMDTTKWSEQRFEIVKETSNFVKKVGYNPKSIAFVPISGWHGDNMLEESTNMGWFKGWTKETKAGVSKGKTLLDAIDAIEPPSRPTDKPLRLPLQDVYKIGGIGTVPVGRVETGTIKAGMVVTFAPANVTTEVKSVEMHHEQLEAGMPGDNVGFNVKNVSVKDIRRGNVCGDTKCDPPKEAASFVAQVIVLNHPGQIGNGYCPVLDCHTAHIACKFDTLQQKIDRRTGKALEEAPKFVKSGDACLVKMVPSKAMCVEPFADYPPLGRFAVRDMRQTVAVGVIKSVEKTDGKAGKVTKAAVKPVPRSSYAR.

G2 bears the N,N,N-trimethylglycine mark. N6,N6-dimethyllysine; alternate is present on K3. K3 carries the N6-methyllysine; alternate modification. The tr-type G domain maps to 5-239 (KNHVNVVVIG…DAIEPPSRPT (235 aa)). The interval 14–21 (GHVDSGKS) is G1. 14-21 (GHVDSGKS) contributes to the GTP binding site. K30 carries the post-translational modification N6-methyllysine. Positions 70–74 (GITID) are G2. An N6,N6,N6-trimethyllysine modification is found at K79. Residues 91–94 (DAPG) form a G3 region. GTP is bound by residues 91–95 (DAPGH) and 153–156 (NKMD). Positions 153 to 156 (NKMD) are G4. The tract at residues 191 to 193 (SGW) is G5. K315 bears the N6,N6-dimethyllysine; alternate mark. The residue at position 315 (K315) is an N6-methyllysine; alternate. N6-methyllysine is present on K389.

The protein belongs to the TRAFAC class translation factor GTPase superfamily. Classic translation factor GTPase family. EF-Tu/EF-1A subfamily.

The protein localises to the cytoplasm. Its function is as follows. This protein promotes the GTP-dependent binding of aminoacyl-tRNA to the A-site of ribosomes during protein biosynthesis. This chain is Elongation factor 1-alpha (TEF), found in Puccinia graminis (Black stem rust fungus).